Here is a 122-residue protein sequence, read N- to C-terminus: Phospholipase A2 crotoxin basic chain (122 aa).

7 cysteine pairs are disulfide-bonded: cysteine 26–cysteine 115, cysteine 28–cysteine 44, cysteine 43–cysteine 95, cysteine 49–cysteine 122, cysteine 50–cysteine 88, cysteine 57–cysteine 81, and cysteine 75–cysteine 86. The Ca(2+) site is built by tyrosine 27, glycine 29, and glycine 31. The active site involves histidine 47. Position 48 (aspartate 48) interacts with Ca(2+). The active site involves aspartate 89.

As to quaternary structure, heterodimer of one acidic (CA also named crotapotin) and one basic (CB) subunits; non-covalently linked. Ca(2+) serves as cofactor. As to expression, expressed by the venom gland.

The protein resides in the secreted. It catalyses the reaction a 1,2-diacyl-sn-glycero-3-phosphocholine + H2O = a 1-acyl-sn-glycero-3-phosphocholine + a fatty acid + H(+). Functionally, heterodimer CA-CB: Crotoxin is a potent presynaptic neurotoxin that possesses phospholipase A2 (PLA2) activity and exerts a lethal action by blocking neuromuscular transmission. It consists of a non-covalent association of a basic and weakly toxic PLA2 subunit (CB), with a small acidic, non-enzymatic and non-toxic subunit (CA also named crotapotin). The complex acts by binding to a specific 48-kDa protein (R48) receptor located on presynaptic membranes, forming a transient ternary complex CA-CB-R48, followed by dissociation of the CA-CB complex and release of the CA subunit. At equilibrium, only the CB subunits remain associated with the specific crotoxin receptor. In addition to neurotoxicity, crotoxin has been found to exert nephrotoxicity, and cardiovascular toxicity. Moreover, anti-inflammatory, immunomodulatory, anti-tumor and analgesic effects of crotoxin have also been reported. In terms of biological role, monomer CB: The basic subunit of crotoxin is a snake venom phospholipase A2 (PLA2) that exhibits weak neurotoxicity and strong anticoagulant effects by binding to factor Xa (F10) and inhibiting the prothrombinase activity. In addition, it exerts myotoxicity, nephrotoxicity, and cardiovascular toxicity as well as anti-inflammatory, immunomodulatory, anti-tumor and analgesic effects. Also shows a strong antimicrobial activity against X.axonopodis passiforae (Gram-negative) which is completely dependent on the enzymatic activity. PLA2 catalyzes the calcium-dependent hydrolysis of the 2- acyl groups in 3-sn-phosphoglycerides. This chain is Phospholipase A2 crotoxin basic chain, found in Crotalus durissus collilineatus (Brazilian rattlesnake).